The sequence spans 330 residues: Ketol-acid reductoisomerase (NADP(+)) (330 aa).

The 181-residue stretch at 1 to 181 (MKVLYDDDVN…GLTRAGVIET (181 aa)) folds into the KARI N-terminal Rossmann domain. NADP(+)-binding positions include 24–27 (YGSQ), Arg47, Ser52, and 82–85 (DEIQ). His107 is a catalytic residue. Gly133 provides a ligand contact to NADP(+). The KARI C-terminal knotted domain maps to 182 to 327 (TYREETETDL…KNLRIACGLQ (146 aa)). Mg(2+)-binding residues include Asp190, Glu194, Glu226, and Glu230. Ser251 is a substrate binding site.

This sequence belongs to the ketol-acid reductoisomerase family. The cofactor is Mg(2+).

It catalyses the reaction (2R)-2,3-dihydroxy-3-methylbutanoate + NADP(+) = (2S)-2-acetolactate + NADPH + H(+). The enzyme catalyses (2R,3R)-2,3-dihydroxy-3-methylpentanoate + NADP(+) = (S)-2-ethyl-2-hydroxy-3-oxobutanoate + NADPH + H(+). Its pathway is amino-acid biosynthesis; L-isoleucine biosynthesis; L-isoleucine from 2-oxobutanoate: step 2/4. It participates in amino-acid biosynthesis; L-valine biosynthesis; L-valine from pyruvate: step 2/4. Its function is as follows. Involved in the biosynthesis of branched-chain amino acids (BCAA). Catalyzes an alkyl-migration followed by a ketol-acid reduction of (S)-2-acetolactate (S2AL) to yield (R)-2,3-dihydroxy-isovalerate. In the isomerase reaction, S2AL is rearranged via a Mg-dependent methyl migration to produce 3-hydroxy-3-methyl-2-ketobutyrate (HMKB). In the reductase reaction, this 2-ketoacid undergoes a metal-dependent reduction by NADPH to yield (R)-2,3-dihydroxy-isovalerate. The chain is Ketol-acid reductoisomerase (NADP(+)) from Methanosphaera stadtmanae (strain ATCC 43021 / DSM 3091 / JCM 11832 / MCB-3).